The sequence spans 95 residues: Integration host factor subunit beta (95 aa).

The protein belongs to the bacterial histone-like protein family. In terms of assembly, heterodimer of an alpha and a beta chain.

Functionally, this protein is one of the two subunits of integration host factor, a specific DNA-binding protein that functions in genetic recombination as well as in transcriptional and translational control. The sequence is that of Integration host factor subunit beta from Shewanella pealeana (strain ATCC 700345 / ANG-SQ1).